The sequence spans 171 residues: MLFNKIISLAATLATASALPFAPAPRSISGGVTLINNLSQDLYLWSVSGTASPMVTLPAGQSYQETWQINPTGGGISIKIGCSEDGSDVLQYEYTKVGDLLFWDMSSIDLSSGSPLVAAGFDVSIDDSSCDTVTCAPGDVNCSESYQYPDDHNTRACSSSAAYTLTLGTAN.

The signal sequence occupies residues 1-18; it reads MLFNKIISLAATLATASA. N37 and N141 each carry an N-linked (GlcNAc...) asparagine glycan. 2 disulfides stabilise this stretch: C130-C157 and C135-C142.

This sequence belongs to the thaumatin family.

It is found in the secreted. The protein resides in the extracellular space. It localises to the extracellular matrix. The protein localises to the cell wall. Its function is as follows. Secreted thaumatin-like protein that, with cetA, plays an essential role in early conidial germination with a possible role in cell wall remodeling. This is Secreted thaumatin-like protein calA from Emericella nidulans (strain FGSC A4 / ATCC 38163 / CBS 112.46 / NRRL 194 / M139) (Aspergillus nidulans).